The primary structure comprises 413 residues: Ribosomal RNA large subunit methyltransferase G (413 aa).

Positions 389-413 (EAEVEQAFDTETPHPQSALYGKPKA) are disordered.

It belongs to the methyltransferase superfamily. RlmG family.

It localises to the cytoplasm. The enzyme catalyses guanosine(1835) in 23S rRNA + S-adenosyl-L-methionine = N(2)-methylguanosine(1835) in 23S rRNA + S-adenosyl-L-homocysteine + H(+). Specifically methylates the guanine in position 1835 (m2G1835) of 23S rRNA. The polypeptide is Ribosomal RNA large subunit methyltransferase G (Shewanella pealeana (strain ATCC 700345 / ANG-SQ1)).